A 229-amino-acid polypeptide reads, in one-letter code: LexA repressor (229 aa).

The H-T-H motif DNA-binding region spans 26–46; the sequence is FDEMKEALDLASKSGIHRLIT. Active-site for autocatalytic cleavage activity residues include Ser149 and Lys187.

This sequence belongs to the peptidase S24 family. As to quaternary structure, homodimer.

It catalyses the reaction Hydrolysis of Ala-|-Gly bond in repressor LexA.. Its function is as follows. Represses a number of genes involved in the response to DNA damage (SOS response), including recA and lexA. In the presence of single-stranded DNA, RecA interacts with LexA causing an autocatalytic cleavage which disrupts the DNA-binding part of LexA, leading to derepression of the SOS regulon and eventually DNA repair. This chain is LexA repressor, found in Phenylobacterium zucineum (strain HLK1).